Consider the following 183-residue polypeptide: Proton-transporting V-type ATPase complex assembly regulator TMEM9 (183 aa).

Positions 1-20 are cleaved as a signal peptide; the sequence is MKLLSLVAVVGCLLVPPAEA. Asparagine 21, asparagine 38, and asparagine 47 each carry an N-linked (GlcNAc...) asparagine glycan. Residues 21-89 lie on the Extracellular side of the membrane; that stretch reads NKSSEDIRCK…YEERSTTTIK (69 aa). A helical transmembrane segment spans residues 90–110; it reads VIIVIYLSVVGALLLYMAFLM. At 111 to 183 the chain is on the cytoplasmic side; it reads LVDPLIRKPD…TVFDRHKMLS (73 aa). A phosphoserine mark is found at serine 137 and serine 144.

This sequence belongs to the TMEM9 family. As to quaternary structure, interacts with the v-ATPase accessory protein ATP6AP2 and with the v-ATPase complex subunit ATP6V0D1; these interactions lead to the assembly of the v-ATPase complex. In terms of processing, N-glycosylated. In terms of tissue distribution, highly expressed in adrenal gland, thyroid gland, testis, ovary and prostate. Moderate expression in trachea, spinal cord, stomach, colon, small intestine and spleen. Low expression in bone marrow, lymph node, thymus and peripheral blood lymphocytes. Expression is detected in hematopoietic cell lines including those of myeloid, erythroid, B- and T-cell origin.

The protein localises to the lysosome membrane. It localises to the late endosome membrane. Its subcellular location is the endosome. The protein resides in the multivesicular body membrane. In terms of biological role, transmembrane protein that binds to and facilitates the assembly of lysosomal proton-transporting V-type ATPase (v-ATPase), resulting in enhanced lysosomal acidification and trafficking. By bringing the v-ATPase accessory protein ATP6AP2 and the v-ATPase subunit ATP6V0D1 together, allows v-ATPase complex formation and activation. TMEM9-controlled vesicular acidification induces hyperactivation of Wnt/beta-catenin signaling, involved in development, tissue homeostasis and tissue regeneration, through lysosomal degradation of adenomatous polyposis coli/APC. In the liver, involved in hepatic regeneration. This Homo sapiens (Human) protein is Proton-transporting V-type ATPase complex assembly regulator TMEM9.